The primary structure comprises 633 residues: ABC transporter G family member 1 (633 aa).

In terms of domain architecture, ABC transporter spans 23 to 265; it reads LTWEDLWVTA…FALSGFPCPT (243 aa). Position 60 to 67 (60 to 67) interacts with ATP; sequence GPSGSGKS. Residues 340–552 enclose the ABC transmembrane type-2 domain; sequence TQSLVLTRRS…AYEGMFKNEF (213 aa). Asn352 carries N-linked (GlcNAc...) asparagine glycosylation. 6 helical membrane-spanning segments follow: residues 364 to 384, 394 to 414, 440 to 460, 470 to 490, 498 to 518, and 580 to 600; these read LAVY…VGFS, MLMF…PSFV, LSAM…AYFM, FIYF…LMMI, FLMG…SGGF, and IDLV…LLVV.

This sequence belongs to the ABC transporter superfamily. ABCG family. Homodimer. As to expression, restricted to the petals, with the highest expression in the limb and, to a lesser extent, in petal tubes, probably in both epidermal and mesophyll cell layers.

Its subcellular location is the cell membrane. Its function is as follows. ABC transporter controlling the release of volatile organic compounds (VOCs), including floral volatile benzenoids and phenylpropanoids (FVBP), in flowers of fragrant cultivars (e.g. cv. Mitchell and cv. V26). This scent, mostly produced in the evening and night by the petals, attracts the pollinators (e.g. the night-active hawkmoth pollinator Manduca sexta). The protein is ABC transporter G family member 1 of Petunia hybrida (Petunia).